The chain runs to 315 residues: 4-hydroxy-3-methylbut-2-enyl diphosphate reductase (315 aa).

Cysteine 12 contributes to the [4Fe-4S] cluster binding site. Histidine 43 and histidine 81 together coordinate (2E)-4-hydroxy-3-methylbut-2-enyl diphosphate. Residues histidine 43 and histidine 81 each contribute to the dimethylallyl diphosphate site. Positions 43 and 81 each coordinate isopentenyl diphosphate. [4Fe-4S] cluster is bound at residue cysteine 103. Histidine 131 contributes to the (2E)-4-hydroxy-3-methylbut-2-enyl diphosphate binding site. Histidine 131 serves as a coordination point for dimethylallyl diphosphate. Position 131 (histidine 131) interacts with isopentenyl diphosphate. Residue glutamate 133 is the Proton donor of the active site. Residue threonine 172 coordinates (2E)-4-hydroxy-3-methylbut-2-enyl diphosphate. Cysteine 200 is a [4Fe-4S] cluster binding site. 3 residues coordinate (2E)-4-hydroxy-3-methylbut-2-enyl diphosphate: serine 228, asparagine 230, and serine 273. Dimethylallyl diphosphate is bound by residues serine 228, asparagine 230, and serine 273. 3 residues coordinate isopentenyl diphosphate: serine 228, asparagine 230, and serine 273.

Belongs to the IspH family. The cofactor is [4Fe-4S] cluster.

The enzyme catalyses isopentenyl diphosphate + 2 oxidized [2Fe-2S]-[ferredoxin] + H2O = (2E)-4-hydroxy-3-methylbut-2-enyl diphosphate + 2 reduced [2Fe-2S]-[ferredoxin] + 2 H(+). It carries out the reaction dimethylallyl diphosphate + 2 oxidized [2Fe-2S]-[ferredoxin] + H2O = (2E)-4-hydroxy-3-methylbut-2-enyl diphosphate + 2 reduced [2Fe-2S]-[ferredoxin] + 2 H(+). The protein operates within isoprenoid biosynthesis; dimethylallyl diphosphate biosynthesis; dimethylallyl diphosphate from (2E)-4-hydroxy-3-methylbutenyl diphosphate: step 1/1. It functions in the pathway isoprenoid biosynthesis; isopentenyl diphosphate biosynthesis via DXP pathway; isopentenyl diphosphate from 1-deoxy-D-xylulose 5-phosphate: step 6/6. Its function is as follows. Catalyzes the conversion of 1-hydroxy-2-methyl-2-(E)-butenyl 4-diphosphate (HMBPP) into a mixture of isopentenyl diphosphate (IPP) and dimethylallyl diphosphate (DMAPP). Acts in the terminal step of the DOXP/MEP pathway for isoprenoid precursor biosynthesis. In Exiguobacterium sibiricum (strain DSM 17290 / CCUG 55495 / CIP 109462 / JCM 13490 / 255-15), this protein is 4-hydroxy-3-methylbut-2-enyl diphosphate reductase.